The following is a 359-amino-acid chain: 3-dehydroquinate synthase (359 aa).

NAD(+)-binding positions include 71–76 (DGEAHK), 105–109 (GVIGD), 129–130 (TT), lysine 142, lysine 151, and 169–172 (TLHT). Residues glutamate 184, histidine 247, and histidine 264 each contribute to the Zn(2+) site.

This sequence belongs to the sugar phosphate cyclases superfamily. Dehydroquinate synthase family. NAD(+) serves as cofactor. It depends on Co(2+) as a cofactor. Requires Zn(2+) as cofactor.

Its subcellular location is the cytoplasm. The catalysed reaction is 7-phospho-2-dehydro-3-deoxy-D-arabino-heptonate = 3-dehydroquinate + phosphate. The protein operates within metabolic intermediate biosynthesis; chorismate biosynthesis; chorismate from D-erythrose 4-phosphate and phosphoenolpyruvate: step 2/7. Functionally, catalyzes the conversion of 3-deoxy-D-arabino-heptulosonate 7-phosphate (DAHP) to dehydroquinate (DHQ). This chain is 3-dehydroquinate synthase, found in Neisseria meningitidis serogroup B (strain ATCC BAA-335 / MC58).